Here is a 230-residue protein sequence, read N- to C-terminus: Large ribosomal subunit protein uL1c (230 aa).

It belongs to the universal ribosomal protein uL1 family. Part of the 50S ribosomal subunit.

The protein resides in the plastid. It localises to the chloroplast. In terms of biological role, binds directly to 23S rRNA. Might be involved in E site tRNA release (Potential). The sequence is that of Large ribosomal subunit protein uL1c (rpl1) from Phaeodactylum tricornutum (strain CCAP 1055/1).